Here is a 94-residue protein sequence, read N- to C-terminus: Enhancer of yellow 2 transcription factor (94 aa).

Belongs to the ENY2 family. Component of the nuclear pore complex (NPC)-associated AMEX complex (anchoring and mRNA export complex), composed of at least e(y)2 and xmas-2. Component of the SAGA transcription coactivator-HAT complexes, at least composed of Ada2b, e(y)2, Pcaf/Gcn5, Taf10 and Nipped-A/Trrap. Within the SAGA complex, e(y)2, Sgf11, and not/nonstop form an additional subcomplex of SAGA called the DUB module (deubiquitination module). Component of the THO complex, composed of at least e(y)2, HPR1, THO2, THOC5, THOC6 and THOC7. Interacts with e(y)1. Interacts with su(Hw) (via zinc fingers). Interacts with xmas-2; required for localization to the nuclear periphery. Interacts with the nuclear pore complex (NPC).

The protein localises to the nucleus. It localises to the nucleoplasm. It is found in the cytoplasm. In terms of biological role, involved in mRNA export coupled transcription activation by association with both the AMEX and the SAGA complexes. The SAGA complex is a multiprotein complex that activates transcription by remodeling chromatin and mediating histone acetylation and deubiquitination. Within the SAGA complex, participates in a subcomplex that specifically deubiquitinates histone H2B. The SAGA complex is recruited to specific gene promoters by activators, where it is required for transcription. Required for nuclear receptor-mediated transactivation. Involved in transcription elongation by recruiting the THO complex onto nascent mRNA. The AMEX complex functions in docking export-competent ribonucleoprotein particles (mRNPs) to the nuclear entrance of the nuclear pore complex (nuclear basket). AMEX participates in mRNA export and accurate chromatin positioning in the nucleus by tethering genes to the nuclear periphery. The chain is Enhancer of yellow 2 transcription factor from Drosophila grimshawi (Hawaiian fruit fly).